The primary structure comprises 62 residues: MAKTIVVKQIGSPIRRPADQRATLVGLGLNKMHKTRELEDTPSVRGMIRKIPHLVEIIEERG.

The protein belongs to the universal ribosomal protein uL30 family. Part of the 50S ribosomal subunit.

The sequence is that of Large ribosomal subunit protein uL30 from Ruegeria pomeroyi (strain ATCC 700808 / DSM 15171 / DSS-3) (Silicibacter pomeroyi).